Reading from the N-terminus, the 298-residue chain is Mitochondrial 2-oxodicarboxylate carrier (298 aa).

Solcar repeat units lie at residues 10 to 99 (HETS…YKKF), 106 to 195 (SPGL…VKNI), and 204 to 293 (LEFL…TYAW). 6 helical membrane-spanning segments follow: residues 16-36 (VAAG…LDVV), 69-88 (FGFY…KRAV), 112-132 (LIAG…FEVV), 166-186 (GLNK…MVYF), 204-224 (LEFL…SVFN), and 276-296 (LGPG…WLQE).

It belongs to the mitochondrial carrier (TC 2.A.29) family.

The protein localises to the mitochondrion inner membrane. It catalyses the reaction 2-oxoadipate(in) + 2-oxoglutarate(out) = 2-oxoadipate(out) + 2-oxoglutarate(in). It carries out the reaction hexanedioate(in) + 2-oxoglutarate(out) = hexanedioate(out) + 2-oxoglutarate(in). The catalysed reaction is L-2-aminoadipate(in) + 2-oxoglutarate(out) = L-2-aminoadipate(out) + 2-oxoglutarate(in). The enzyme catalyses glutarate(in) + 2-oxoglutarate(out) = glutarate(out) + 2-oxoglutarate(in). It catalyses the reaction 2-oxoheptanedioate(in) + 2-oxoglutarate(out) = 2-oxoheptanedioate(out) + 2-oxoglutarate(in). It carries out the reaction heptanedioate(in) + 2-oxoglutarate(out) = heptanedioate(out) + 2-oxoglutarate(in). The catalysed reaction is citrate(in) + 2-oxoglutarate(out) = citrate(out) + 2-oxoglutarate(in). In terms of biological role, transports dicarboxylates across the inner membranes of mitochondria by a counter-exchange mechanism. Can transport 2-oxoadipate (2-oxohexanedioate), 2-oxoglutarate, adipate (hexanedioate), glutarate, and to a lesser extent, pimelate (heptanedioate), 2-oxopimelate (2-oxoheptanedioate), 2-aminoadipate (2-aminohexanedioate), oxaloacetate, and citrate. Plays a central role in catabolism of lysine, hydroxylysine, and tryptophan, by transporting common metabolite intermediates (such as 2-oxoadipate) into the mitochondria, where it is converted into acetyl-CoA and can enter the citric acid (TCA) cycle. The chain is Mitochondrial 2-oxodicarboxylate carrier (Slc25a21) from Mus musculus (Mouse).